The sequence spans 941 residues: PHD finger protein 14 (941 aa).

The tract at residues 22 to 295 is disordered; that stretch reads DYDSSDDSDF…LSQSKSNEDS (274 aa). A phosphoserine mark is found at Ser26 and Ser29. Positions 36–47 are enriched in low complexity; that stretch reads ASDSEGSGNGSE. The segment covering 60 to 72 has biased composition (acidic residues); it reads DSEENILEEELNE. Basic and acidic residues-rich tracts occupy residues 74 to 85, 94 to 109, and 116 to 132; these read IQVKEEQLKNST, QLIK…NGER, and KEKE…EKAT. Position 84 is a phosphoserine (Ser84). Over residues 133–166 the composition is skewed to low complexity; the sequence is VSDSAAASAAGTTPATSPPAVTSPSVPTTTTTTT. Residue Ser189 is modified to Phosphoserine. Acidic residues-rich tracts occupy residues 194–205 and 226–249; these read NAMDDYDSEDDN and DGDN…EGND. At Tyr199 the chain carries Phosphotyrosine. Ser201 is subject to Phosphoserine. At Thr280 the chain carries Phosphothreonine. Residues 281–290 are compositionally biased toward polar residues; sequence NDSLTLSQSK. Phosphoserine is present on residues Ser283, Ser287, Ser291, Ser295, and Ser301. Residues 312 to 373 form a PHD-type 1 zinc finger; sequence ILICCVCLGD…PWFCDACKCG (62 aa). Positions 315, 318, 332, 335, 340, and 343 each coordinate Zn(2+). Ser352 is modified (phosphoserine). Zn(2+) contacts are provided by Cys367, Cys370, Cys378, Cys381, His398, Cys401, Cys434, Cys437, Cys451, Cys456, His461, Cys464, Cys488, and His491. A C2HC pre-PHD-type zinc finger spans residues 375 to 408; the sequence is SPSCELCPNQDGIFKETDAGRWVHIVCALYVPGV. Residues 432–492 form a PHD-type 2 zinc finger; the sequence is KECSFCEDPR…PFFAYCKQHA (61 aa). The residue at position 523 (Ser523) is a Phosphoserine. Residues 623-671 are a coiled coil; sequence MIQIQENMAEQKNIKDKLENEQEKLHVEYNKLCESLEELQNLNGKLRSE. A PHD-type 3 zinc finger spans residues 718-772; it reads LYSCGICKKNHDQHLLLLCDTCKLHYHLGCLDPPLTRMPRKTKNSYWQCSECDQA. The Zn(2+) site is built by Cys721, Cys724, Cys736, Cys739, His744, Cys747, Cys766, and Cys769. Residues Ser774, Ser775, and Ser828 each carry the phosphoserine modification. The tract at residues 804 to 855 is disordered; the sequence is VPQDVPPEPKKIPIRNTRTRGRKRSFVPEEEKHEERVPRERRQRQSVLQKKP. Basic and acidic residues predominate over residues 829-843; it reads FVPEEEKHEERVPRE. A PHD-type 4 zinc finger spans residues 861–914; sequence RTECSTCKGTGDNENLVRCDECRLCYHFGCLDPPLKKSPKQTGYGWICQECDSS. Residues Cys864, Cys867, Cys879, Cys882, His887, Cys890, Cys908, and Cys911 each coordinate Zn(2+). Residues 912-941 form a disordered region; sequence DSSSSKEDENEAEKKNASQELSMEQKTPKK. The segment covering 915-928 has biased composition (basic and acidic residues); the sequence is SSKEDENEAEKKNA. Residues 930 to 941 show a composition bias toward polar residues; that stretch reads QELSMEQKTPKK.

In terms of tissue distribution, high levels detected in testis, lung and spleen and low levels in muscle, heart, intestine and kidney (at protein level). Widely expressed in adult with increased levels in intestine, colon and lung.

Its subcellular location is the nucleus. The protein localises to the chromosome. It localises to the cytoplasm. Functionally, histone-binding protein. Binds preferentially to unmodified histone H3 but can also bind to a lesser extent to histone H3 trimethylated at 'Lys-9' (H3K9me3) as well as to histone H3 monomethylated at 'Lys-27' (H3K27ac) and trimethylated at 'Lys-27' (H3K27me3). Represses PDGFRA expression, thus playing a role in regulation of mesenchymal cell proliferation. Suppresses the expression of CDKN1A/p21 by reducing the level of trimethylation of histone H3 'Lys-4', leading to enhanced proliferation of germinal center B cells. The sequence is that of PHD finger protein 14 (Phf14) from Mus musculus (Mouse).